The following is a 301-amino-acid chain: Ornithine carbamoyltransferase (301 aa).

Residues 47-50 (STRT), Q74, R98, and 125-128 (HPCQ) contribute to the carbamoyl phosphate site. L-ornithine is bound by residues N156, D220, and 224–225 (SM). Residues 260–261 (CL) and R288 contribute to the carbamoyl phosphate site.

It belongs to the aspartate/ornithine carbamoyltransferase superfamily. OTCase family.

It is found in the cytoplasm. The enzyme catalyses carbamoyl phosphate + L-ornithine = L-citrulline + phosphate + H(+). The protein operates within amino-acid biosynthesis; L-arginine biosynthesis; L-arginine from L-ornithine and carbamoyl phosphate: step 1/3. In terms of biological role, reversibly catalyzes the transfer of the carbamoyl group from carbamoyl phosphate (CP) to the N(epsilon) atom of ornithine (ORN) to produce L-citrulline. This is Ornithine carbamoyltransferase from Methanobrevibacter smithii (strain ATCC 35061 / DSM 861 / OCM 144 / PS).